We begin with the raw amino-acid sequence, 270 residues long: uncharacterized protein (270 aa).

Residues 1–22 (MEYIKKIALYMSVLLLIIFIGG) form the signal peptide. Residue Cys23 is the site of N-palmitoyl cysteine attachment. Cys23 carries the S-diacylglycerol cysteine lipid modification.

Belongs to the staphylococcal tandem lipoprotein family.

Its subcellular location is the cell membrane. This is an uncharacterized protein from Staphylococcus aureus (strain N315).